Consider the following 912-residue polypeptide: Non-lysosomal glucosylceramidase (912 aa).

Residues 886-912 (HKKNSSRPAVTQGTAPSQPECGPKRSL) form a disordered region. Residues 891–902 (SRPAVTQGTAPS) are compositionally biased toward polar residues.

The protein belongs to the non-lysosomal glucosylceramidase family.

It is found in the endoplasmic reticulum membrane. The protein resides in the golgi apparatus membrane. It catalyses the reaction a beta-D-glucosyl-(1&lt;-&gt;1')-N-acylsphing-4-enine + H2O = an N-acylsphing-4-enine + D-glucose. It carries out the reaction a beta-D-galactosyl-(1&lt;-&gt;1')-N-acylsphing-4-enine + H2O = an N-acylsphing-4-enine + D-galactose. The catalysed reaction is beta-D-glucosyl-(1-&gt;3)-O-lithocholate + H2O = lithocholate + D-glucose. The enzyme catalyses beta-D-glucosyl-(1-&gt;3)-O-chenodeoxycholate + H2O = chenodeoxycholate + D-glucose. It catalyses the reaction a di-trans,poly-cis-dolichyl beta-D-glucosyl phosphate + chenodeoxycholate = beta-D-glucosyl-(1-&gt;3)-O-chenodeoxycholate + a di-trans,poly-cis-dolichyl phosphate + H(+). It carries out the reaction octyl beta-D-glucose + chenodeoxycholate = beta-D-glucosyl-(1-&gt;3)-O-chenodeoxycholate + octan-1-ol. The catalysed reaction is cholesteryl 3-beta-D-glucoside + H2O = cholesterol + D-glucose. The enzyme catalyses a beta-D-glucosyl-(1&lt;-&gt;1')-N-acylsphing-4-enine + cholesterol = cholesteryl 3-beta-D-glucoside + an N-acylsphing-4-enine. It catalyses the reaction beta-D-glucosyl-N-(9Z-octadecenoyl)-sphing-4E-enine + cholesterol = N-(9Z-octadecenoyl)-sphing-4-enine + cholesteryl 3-beta-D-glucoside. It carries out the reaction a beta-D-galactosyl-(1&lt;-&gt;1')-N-acylsphing-4-enine + cholesterol = cholesteryl 3-beta-D-galactoside + an N-acylsphing-4-enine. The catalysed reaction is 1-(beta-D-galactosyl)-N-dodecanoylsphing-4-enine + cholesterol = cholesteryl 3-beta-D-galactoside + N-dodecanoylsphing-4-enine. Its pathway is lipid metabolism; sphingolipid metabolism. It participates in steroid metabolism; cholesterol metabolism. With respect to regulation, enzymatic activity is dependent on membrane association and requires the presence of lipids. Non-lysosomal glucosylceramidase that catalyzes the hydrolysis of glucosylceramides/GlcCers (such as beta-D-glucosyl-(1&lt;-&gt;1')-N-acylsphing-4-enine) to free glucose and ceramides (such as N-acylsphing-4-enine). GlcCers are membrane glycosphingolipids that have a wide intracellular distribution. They are the main precursors of more complex glycosphingolipids that play a role in cellular growth, differentiation, adhesion, signaling, cytoskeletal dynamics and membrane properties. Involved in the transglucosylation of cholesterol, transfers glucose from GlcCer to cholesterol, thereby modifying its water solubility and biological properties. Under specific conditions, may catalyze the reverse reaction, transferring glucose from cholesteryl-3-beta-D-glucoside to ceramide (such as N-acylsphing-4-enine). May play a role in the metabolism of bile acids. Able to hydrolyze bile acid 3-O-glucosides as well as to produce bile acid-glucose conjugates thanks to a bile acid glucosyl transferase activity. Catalyzes the hydrolysis of galactosylceramides/GalCers (such as beta-D-galactosyl-(1&lt;-&gt;1')-N-acylsphing-4-enine), as well as the galactosyl transfer between GalCers and cholesterol in vitro with lower activity compared with their activity against GlcCers. The polypeptide is Non-lysosomal glucosylceramidase (Rattus norvegicus (Rat)).